A 115-amino-acid chain; its full sequence is NADH-ubiquinone oxidoreductase chain 3 (115 aa).

The next 3 helical transmembrane spans lie at 3-23 (LYTV…VAFW), 55-75 (FFLV…LLPL), and 86-106 (TMMI…AYEW).

The protein belongs to the complex I subunit 3 family. As to quaternary structure, core subunit of respiratory chain NADH dehydrogenase (Complex I) which is composed of 45 different subunits. Interacts with TMEM186. Interacts with TMEM242.

Its subcellular location is the mitochondrion inner membrane. The enzyme catalyses a ubiquinone + NADH + 5 H(+)(in) = a ubiquinol + NAD(+) + 4 H(+)(out). Its function is as follows. Core subunit of the mitochondrial membrane respiratory chain NADH dehydrogenase (Complex I) which catalyzes electron transfer from NADH through the respiratory chain, using ubiquinone as an electron acceptor. Essential for the catalytic activity of complex I. This is NADH-ubiquinone oxidoreductase chain 3 from Mus musculus (Mouse).